A 319-amino-acid chain; its full sequence is UPF0761 membrane protein PBPRA3489 (319 aa).

The next 6 membrane-spanning stretches (helical) occupy residues 50 to 70, 107 to 127, 143 to 163, 188 to 208, 215 to 235, and 249 to 269; these read LVPMITVVLAALSAFPVFAGL, VGIGALFVVAMMLMSSIDHAL, FSIYWMVLTLGPILVGSSIAV, ALPVIMSSSAFLGLYLLVPNL, ALLGALVASSLFELSKKGFAL, and ALAVIPILFVWVYLCWCIVLL.

This sequence belongs to the UPF0761 family.

It is found in the cell inner membrane. The sequence is that of UPF0761 membrane protein PBPRA3489 from Photobacterium profundum (strain SS9).